We begin with the raw amino-acid sequence, 639 residues long: DNA mismatch repair protein MutL (639 aa).

The interval 336–392 is disordered; that stretch reads SAHDDPTPAISGAARDEEPRGVENRASAGENRFNRPASSPVASAPRPAHVAAPRMPA. Residues 349 to 358 show a composition bias toward basic and acidic residues; that stretch reads ARDEEPRGVE. Low complexity predominate over residues 370-392; sequence RPASSPVASAPRPAHVAAPRMPA.

It belongs to the DNA mismatch repair MutL/HexB family.

Its function is as follows. This protein is involved in the repair of mismatches in DNA. It is required for dam-dependent methyl-directed DNA mismatch repair. May act as a 'molecular matchmaker', a protein that promotes the formation of a stable complex between two or more DNA-binding proteins in an ATP-dependent manner without itself being part of a final effector complex. The chain is DNA mismatch repair protein MutL from Edwardsiella ictaluri (strain 93-146).